An 816-amino-acid chain; its full sequence is Glycerol-3-phosphate acyltransferase (816 aa).

The HXXXXD motif motif lies at 298 to 303 (CHRSHM).

This sequence belongs to the GPAT/DAPAT family.

It is found in the cell membrane. It carries out the reaction sn-glycerol 3-phosphate + an acyl-CoA = a 1-acyl-sn-glycero-3-phosphate + CoA. It functions in the pathway phospholipid metabolism; CDP-diacylglycerol biosynthesis; CDP-diacylglycerol from sn-glycerol 3-phosphate: step 1/3. This chain is Glycerol-3-phosphate acyltransferase, found in Hamiltonella defensa subsp. Acyrthosiphon pisum (strain 5AT).